We begin with the raw amino-acid sequence, 1397 residues long: Probable cyclin-dependent serine/threonine-protein kinase DDB_G0292550 (1397 aa).

In terms of domain architecture, Protein kinase spans 4-287; it reads FQIIELIGSG…TKEALNHPWF (284 aa). Residues 10–18 and lysine 33 each bind ATP; that span reads IGSGSYGKV. The active-site Proton acceptor is aspartate 124. 8 disordered regions span residues 412–567, 671–728, 763–831, 845–949, 996–1101, 1115–1174, 1227–1324, and 1340–1397; these read NNNN…NNNN, PLSI…NNGF, NEMG…NGNN, NNNN…YANH, NGLA…NTHN, NNGF…NSPV, NSAS…SFGL, and KKKK…IVLD. The segment covering 676–715 has biased composition (low complexity); sequence SQHHNTSSSDTHNNNNNNYNNNNNNNNNINNNNINSIHNQ. Low complexity-rich tracts occupy residues 845-941, 1012-1021, 1028-1101, and 1115-1155; these read NNNN…NGNG, NSNNNNSGNN, NTFN…NTHN, and NNGF…TKNN. The span at 1156–1171 shows a compositional bias: polar residues; the sequence is TQFGPNILSSTQTSHN. Low complexity-rich tracts occupy residues 1253–1321 and 1354–1380; these read NNNN…NNNS and SSSQ…SQTQ.

It belongs to the protein kinase superfamily. CMGC Ser/Thr protein kinase family. CDC2/CDKX subfamily.

The enzyme catalyses L-seryl-[protein] + ATP = O-phospho-L-seryl-[protein] + ADP + H(+). The catalysed reaction is L-threonyl-[protein] + ATP = O-phospho-L-threonyl-[protein] + ADP + H(+). The sequence is that of Probable cyclin-dependent serine/threonine-protein kinase DDB_G0292550 from Dictyostelium discoideum (Social amoeba).